Consider the following 107-residue polypeptide: Pre-mRNA-splicing factor RDS3 (107 aa).

It belongs to the PHF5 family. As to quaternary structure, component of the spliceosome where it interacts with CUS1, HSH49, HSH155, IST3 and RSE1. Also interacts with YRA1.

It localises to the nucleus. Required for pre-mRNA splicing. Involved in regulation of drug sensitivity and may play a role in multidrug resistance. The sequence is that of Pre-mRNA-splicing factor RDS3 (RDS3) from Saccharomyces cerevisiae (strain ATCC 204508 / S288c) (Baker's yeast).